Reading from the N-terminus, the 313-residue chain is Acetylglutamate kinase (313 aa).

Residues 84–85 (GG), arginine 106, and asparagine 210 contribute to the substrate site.

The protein belongs to the acetylglutamate kinase family. ArgB subfamily.

Its subcellular location is the cytoplasm. The catalysed reaction is N-acetyl-L-glutamate + ATP = N-acetyl-L-glutamyl 5-phosphate + ADP. It participates in amino-acid biosynthesis; L-arginine biosynthesis; N(2)-acetyl-L-ornithine from L-glutamate: step 2/4. In terms of biological role, catalyzes the ATP-dependent phosphorylation of N-acetyl-L-glutamate. The sequence is that of Acetylglutamate kinase from Gluconacetobacter diazotrophicus (strain ATCC 49037 / DSM 5601 / CCUG 37298 / CIP 103539 / LMG 7603 / PAl5).